The primary structure comprises 64 residues: Large ribosomal subunit protein bL35 (64 aa).

The segment covering 22–31 has biased composition (basic residues); that stretch reads GKVKHGHAYR. Residues 22 to 64 are disordered; sequence GKVKHGHAYRSHLAQSKTTKQKRQSRKSTLMNNSDFKRLKKLI.

This sequence belongs to the bacterial ribosomal protein bL35 family.

This is Large ribosomal subunit protein bL35 from Mesomycoplasma hyopneumoniae (strain 232) (Mycoplasma hyopneumoniae).